A 293-amino-acid chain; its full sequence is uncharacterized protein (293 aa).

Residues threonine 43 and tyrosine 105 each act as charge relay system in the active site. Tyrosine 131 (proton donor) is an active-site residue. Lysine 159 functions as the Schiff-base intermediate with substrate in the catalytic mechanism.

Belongs to the DapA family. As to quaternary structure, homotetramer.

It is found in the cytoplasm. This is an uncharacterized protein from Thermococcus onnurineus (strain NA1).